The chain runs to 204 residues: Thymidine kinase (204 aa).

Residues 23 to 30 and 95 to 98 each bind ATP; these read GSMFSGKT and DEAQ. The active-site Proton acceptor is the glutamate 96. Cysteine 152, cysteine 155, cysteine 184, and cysteine 187 together coordinate Zn(2+).

The protein belongs to the thymidine kinase family. Homotetramer.

The protein resides in the cytoplasm. The catalysed reaction is thymidine + ATP = dTMP + ADP + H(+). In Porphyromonas gingivalis (strain ATCC BAA-308 / W83), this protein is Thymidine kinase.